The sequence spans 271 residues: Putative pyruvate, phosphate dikinase regulatory protein (271 aa).

Residue Gly151–Thr158 coordinates ADP.

The protein belongs to the pyruvate, phosphate/water dikinase regulatory protein family. PDRP subfamily.

It carries out the reaction N(tele)-phospho-L-histidyl/L-threonyl-[pyruvate, phosphate dikinase] + ADP = N(tele)-phospho-L-histidyl/O-phospho-L-threonyl-[pyruvate, phosphate dikinase] + AMP + H(+). It catalyses the reaction N(tele)-phospho-L-histidyl/O-phospho-L-threonyl-[pyruvate, phosphate dikinase] + phosphate + H(+) = N(tele)-phospho-L-histidyl/L-threonyl-[pyruvate, phosphate dikinase] + diphosphate. Its function is as follows. Bifunctional serine/threonine kinase and phosphorylase involved in the regulation of the pyruvate, phosphate dikinase (PPDK) by catalyzing its phosphorylation/dephosphorylation. This Streptococcus uberis (strain ATCC BAA-854 / 0140J) protein is Putative pyruvate, phosphate dikinase regulatory protein.